A 367-amino-acid chain; its full sequence is Putative heat shock 70 kDa protein 7 (367 aa).

This sequence belongs to the heat shock protein 70 family.

The protein is Putative heat shock 70 kDa protein 7 (HSPA7) of Homo sapiens (Human).